We begin with the raw amino-acid sequence, 167 residues long: Large ribosomal subunit protein bL9 (167 aa).

The protein belongs to the bacterial ribosomal protein bL9 family.

In terms of biological role, binds to the 23S rRNA. The polypeptide is Large ribosomal subunit protein bL9 (Chlamydia trachomatis serovar L2 (strain ATCC VR-902B / DSM 19102 / 434/Bu)).